A 433-amino-acid chain; its full sequence is 26S proteasome regulatory subunit 7 (433 aa).

Positions 1–22 (MPDYLGADQRKTKEDEKDDKPI) are disordered. Residues 8 to 22 (DQRKTKEDEKDDKPI) show a composition bias toward basic and acidic residues. Residue Lys-116 is modified to N6-acetyllysine. 216–223 (GPPGTGKT) contacts ATP. The residue at position 422 (Lys-422) is an N6-acetyllysine.

The protein belongs to the AAA ATPase family. Component of the 19S proteasome regulatory particle complex. The 26S proteasome consists of a 20S core particle (CP) and two 19S regulatory subunits (RP). The regulatory particle is made of a lid composed of 9 subunits, a base containing 6 ATPases including PSMC2 and few additional components. Interacts with NDC80/HEC; this interaction is detected only during M phase. Interacts and SQSTM1. Interacts with PAAF1. Directly interacts with TRIM5. In terms of processing, monoubiquitinated by RNF181. Phosphorylated. Dephosphorylated by UBLCP1 which impairs PSMC2 ATPase activity and disrupts 26S proteasome assembly.

The protein localises to the cytoplasm. It is found in the nucleus. Component of the 26S proteasome, a multiprotein complex involved in the ATP-dependent degradation of ubiquitinated proteins. This complex plays a key role in the maintenance of protein homeostasis by removing misfolded or damaged proteins, which could impair cellular functions, and by removing proteins whose functions are no longer required. Therefore, the proteasome participates in numerous cellular processes, including cell cycle progression, apoptosis, or DNA damage repair. PSMC2 belongs to the heterohexameric ring of AAA (ATPases associated with diverse cellular activities) proteins that unfolds ubiquitinated target proteins that are concurrently translocated into a proteolytic chamber and degraded into peptides. The protein is 26S proteasome regulatory subunit 7 (PSMC2) of Pongo abelii (Sumatran orangutan).